A 522-amino-acid polypeptide reads, in one-letter code: Glutamate--cysteine ligase (522 aa).

Belongs to the glutamate--cysteine ligase type 1 family. Type 1 subfamily.

It carries out the reaction L-cysteine + L-glutamate + ATP = gamma-L-glutamyl-L-cysteine + ADP + phosphate + H(+). Its pathway is sulfur metabolism; glutathione biosynthesis; glutathione from L-cysteine and L-glutamate: step 1/2. The sequence is that of Glutamate--cysteine ligase from Shewanella pealeana (strain ATCC 700345 / ANG-SQ1).